The following is a 341-amino-acid chain: Ferrochelatase (341 aa).

Positions 196 and 277 each coordinate Fe cation.

The protein belongs to the ferrochelatase family.

It is found in the cytoplasm. The catalysed reaction is heme b + 2 H(+) = protoporphyrin IX + Fe(2+). It participates in porphyrin-containing compound metabolism; protoheme biosynthesis; protoheme from protoporphyrin-IX: step 1/1. Its function is as follows. Catalyzes the ferrous insertion into protoporphyrin IX. The protein is Ferrochelatase of Synechococcus sp. (strain JA-3-3Ab) (Cyanobacteria bacterium Yellowstone A-Prime).